We begin with the raw amino-acid sequence, 259 residues long: 4-hydroxy-tetrahydrodipicolinate reductase (259 aa).

NAD(+)-binding positions include 8–13 (GFAGAM), 94–96 (GTT), and 120–123 (APNF). Histidine 150 acts as the Proton donor/acceptor in catalysis. (S)-2,3,4,5-tetrahydrodipicolinate is bound at residue histidine 151. Residue lysine 154 is the Proton donor of the active site. Position 160-161 (160-161 (GT)) interacts with (S)-2,3,4,5-tetrahydrodipicolinate.

It belongs to the DapB family.

The protein resides in the cytoplasm. The enzyme catalyses (S)-2,3,4,5-tetrahydrodipicolinate + NAD(+) + H2O = (2S,4S)-4-hydroxy-2,3,4,5-tetrahydrodipicolinate + NADH + H(+). The catalysed reaction is (S)-2,3,4,5-tetrahydrodipicolinate + NADP(+) + H2O = (2S,4S)-4-hydroxy-2,3,4,5-tetrahydrodipicolinate + NADPH + H(+). It participates in amino-acid biosynthesis; L-lysine biosynthesis via DAP pathway; (S)-tetrahydrodipicolinate from L-aspartate: step 4/4. Functionally, catalyzes the conversion of 4-hydroxy-tetrahydrodipicolinate (HTPA) to tetrahydrodipicolinate. The protein is 4-hydroxy-tetrahydrodipicolinate reductase of Limosilactobacillus fermentum (strain NBRC 3956 / LMG 18251) (Lactobacillus fermentum).